The following is a 428-amino-acid chain: Delta-aminolevulinic acid dehydratase, chloroplastic (428 aa).

The Schiff-base intermediate with substrate role is filled by Lys-294. 5-aminolevulinate is bound by residues Arg-304 and Lys-316. Glu-332 contributes to the Mg(2+) binding site. Lys-347 functions as the Schiff-base intermediate with substrate in the catalytic mechanism. 5-aminolevulinate is bound by residues Ser-373 and Tyr-412.

It belongs to the ALAD family. In terms of assembly, homooctamer. Mg(2+) serves as cofactor.

Its subcellular location is the plastid. The protein localises to the chloroplast. The catalysed reaction is 2 5-aminolevulinate = porphobilinogen + 2 H2O + H(+). The protein operates within porphyrin-containing compound metabolism; protoporphyrin-IX biosynthesis; coproporphyrinogen-III from 5-aminolevulinate: step 1/4. In terms of biological role, catalyzes an early step in the biosynthesis of tetrapyrroles. Binds two molecules of 5-aminolevulinate per subunit, each at a distinct site, and catalyzes their condensation to form porphobilinogen. This Hordeum vulgare (Barley) protein is Delta-aminolevulinic acid dehydratase, chloroplastic (HEMB).